The sequence spans 457 residues: Siroheme synthase (457 aa).

Positions 1-204 (MDHLPIFCQL…NDQKAITETT (204 aa)) are precorrin-2 dehydrogenase /sirohydrochlorin ferrochelatase. Residues 22–23 (DV) and 43–44 (LA) each bind NAD(+). Serine 128 is modified (phosphoserine). Residues 216-457 (GEVVLVGAGP…RDKLNWFSNH (242 aa)) form a uroporphyrinogen-III C-methyltransferase region. Position 225 (proline 225) interacts with S-adenosyl-L-methionine. The Proton acceptor role is filled by aspartate 248. The active-site Proton donor is lysine 270. Residues 301–303 (GGD), isoleucine 306, 331–332 (TA), methionine 382, and glycine 411 contribute to the S-adenosyl-L-methionine site.

The protein in the N-terminal section; belongs to the precorrin-2 dehydrogenase / sirohydrochlorin ferrochelatase family. It in the C-terminal section; belongs to the precorrin methyltransferase family.

The enzyme catalyses uroporphyrinogen III + 2 S-adenosyl-L-methionine = precorrin-2 + 2 S-adenosyl-L-homocysteine + H(+). It catalyses the reaction precorrin-2 + NAD(+) = sirohydrochlorin + NADH + 2 H(+). The catalysed reaction is siroheme + 2 H(+) = sirohydrochlorin + Fe(2+). Its pathway is cofactor biosynthesis; adenosylcobalamin biosynthesis; precorrin-2 from uroporphyrinogen III: step 1/1. It participates in cofactor biosynthesis; adenosylcobalamin biosynthesis; sirohydrochlorin from precorrin-2: step 1/1. It functions in the pathway porphyrin-containing compound metabolism; siroheme biosynthesis; precorrin-2 from uroporphyrinogen III: step 1/1. The protein operates within porphyrin-containing compound metabolism; siroheme biosynthesis; siroheme from sirohydrochlorin: step 1/1. Its pathway is porphyrin-containing compound metabolism; siroheme biosynthesis; sirohydrochlorin from precorrin-2: step 1/1. Its function is as follows. Multifunctional enzyme that catalyzes the SAM-dependent methylations of uroporphyrinogen III at position C-2 and C-7 to form precorrin-2 via precorrin-1. Then it catalyzes the NAD-dependent ring dehydrogenation of precorrin-2 to yield sirohydrochlorin. Finally, it catalyzes the ferrochelation of sirohydrochlorin to yield siroheme. This is Siroheme synthase from Escherichia coli O17:K52:H18 (strain UMN026 / ExPEC).